The primary structure comprises 1734 residues: Protein TIC 214 (1734 aa).

The next 6 membrane-spanning stretches (helical) occupy residues 19–39, 68–88, 91–111, 133–153, 176–196, and 227–247; these read IINS…FSIG, FIAG…HLAL, PHTI…WNNH, VFLN…SSML, VGWL…LVWI, and IFSI…PSPI. The stretch at 1433-1485 forms a coiled coil; sequence NLNNEEKELADEVELESDNEKQINPESALSNQEKTIQEIYAESKKKKRQNKKQ.

The protein belongs to the TIC214 family. In terms of assembly, part of the Tic complex.

It is found in the plastid. It localises to the chloroplast inner membrane. Functionally, involved in protein precursor import into chloroplasts. May be part of an intermediate translocation complex acting as a protein-conducting channel at the inner envelope. This is Protein TIC 214 from Lepidium virginicum (Virginia pepperweed).